The chain runs to 326 residues: Malate dehydrogenase (326 aa).

NAD(+) is bound at residue 11–17; sequence GAAGQIG. Positions 92 and 98 each coordinate substrate. Residues Asn-105, Gln-112, and 129 to 131 contribute to the NAD(+) site; that span reads VGN. Residues Asn-131 and Arg-162 each coordinate substrate. His-187 (proton acceptor) is an active-site residue.

It belongs to the LDH/MDH superfamily. MDH type 2 family.

The catalysed reaction is (S)-malate + NAD(+) = oxaloacetate + NADH + H(+). In terms of biological role, catalyzes the reversible oxidation of malate to oxaloacetate. This Leptospira borgpetersenii serovar Hardjo-bovis (strain JB197) protein is Malate dehydrogenase.